The sequence spans 375 residues: 23S rRNA (uracil(747)-C(5))-methyltransferase RlmC (375 aa).

Residues Cys3, Cys11, Cys14, and Cys87 each contribute to the [4Fe-4S] cluster site. S-adenosyl-L-methionine contacts are provided by Gln212, Phe241, Glu262, and Asn307. Cys334 serves as the catalytic Nucleophile.

It belongs to the class I-like SAM-binding methyltransferase superfamily. RNA M5U methyltransferase family. RlmC subfamily.

The enzyme catalyses uridine(747) in 23S rRNA + S-adenosyl-L-methionine = 5-methyluridine(747) in 23S rRNA + S-adenosyl-L-homocysteine + H(+). Its function is as follows. Catalyzes the formation of 5-methyl-uridine at position 747 (m5U747) in 23S rRNA. This Salmonella dublin (strain CT_02021853) protein is 23S rRNA (uracil(747)-C(5))-methyltransferase RlmC.